The primary structure comprises 594 residues: Neopentalenolactone D synthase (594 aa).

FAD-binding positions include 64–65 (IG), 86–87 (DK), 94–95 (TW), 106–107 (DV), Tyr-112, Val-156, and Met-494.

Belongs to the FAD-binding monooxygenase family. FAD is required as a cofactor.

The enzyme catalyses 1-deoxy-11-oxopentalenate + NADPH + O2 + H(+) = neopentalenolactone D + NADP(+) + H2O. It participates in antibiotic biosynthesis; neopentalenolactone biosynthesis. Functionally, catalyzes the flavin-dependent Baeyer-Villiger oxidation of 1-deoxy-11-oxopentalenic acid to neopentalenolactone D in the biosynthesis of neopentalenolactone antibiotic. The sequence is that of Neopentalenolactone D synthase (ptlE) from Streptomyces avermitilis (strain ATCC 31267 / DSM 46492 / JCM 5070 / NBRC 14893 / NCIMB 12804 / NRRL 8165 / MA-4680).